The chain runs to 258 residues: MAASILNVLLRRLPGVSPFRGAYGVQVLLQTLCTKAPPEDDSLPQVPISPYKDEPWKYLDSEEYQNRYGSRPVWADYRRNHKGGIPPQRTRKMCIRGNKVAGNPCPICRDQKLHVDFRNVKLLEQFVCAHTGIIFHAPYTGVCMKQHKKLTQAIQKARDHGLLRYHIPQVEPRDLDFSTTHGAVSSTPPAPTLVSGDPWYPWYSWKQPPERELSRLRRLYQGRLREESGPPPELMPEVPLTAPAEASSTEPGAPQSAL.

The N-terminal 35 residues, 1 to 35, are a transit peptide targeting the mitochondrion; sequence MAASILNVLLRRLPGVSPFRGAYGVQVLLQTLCTK. Phosphoserine is present on serine 49. The segment at 223 to 258 is disordered; that stretch reads RLREESGPPPELMPEVPLTAPAEASSTEPGAPQSAL.

Belongs to the bacterial ribosomal protein bS18 family. Mitochondrion-specific ribosomal protein mS40 subfamily. As to quaternary structure, component of the mitochondrial ribosome small subunit (28S) which comprises a 12S rRNA and about 30 distinct proteins.

It localises to the mitochondrion. In Sus scrofa (Pig), this protein is Small ribosomal subunit protein mS40 (MRPS18B).